A 130-amino-acid chain; its full sequence is Ribosome-binding factor A (130 aa).

Belongs to the RbfA family. Monomer. Binds 30S ribosomal subunits, but not 50S ribosomal subunits or 70S ribosomes.

The protein resides in the cytoplasm. Its function is as follows. One of several proteins that assist in the late maturation steps of the functional core of the 30S ribosomal subunit. Associates with free 30S ribosomal subunits (but not with 30S subunits that are part of 70S ribosomes or polysomes). Required for efficient processing of 16S rRNA. May interact with the 5'-terminal helix region of 16S rRNA. In Flavobacterium psychrophilum (strain ATCC 49511 / DSM 21280 / CIP 103535 / JIP02/86), this protein is Ribosome-binding factor A.